The primary structure comprises 832 residues: Protein translocase subunit SecA (832 aa).

Residues Gln87, 105–109 (GEGKT), and Asp512 each bind ATP.

The protein belongs to the SecA family. Monomer and homodimer. Part of the essential Sec protein translocation apparatus which comprises SecA, SecYEG and auxiliary proteins SecDF-YajC and YidC.

It is found in the cell membrane. The protein localises to the cytoplasm. The catalysed reaction is ATP + H2O + cellular proteinSide 1 = ADP + phosphate + cellular proteinSide 2.. In terms of biological role, part of the Sec protein translocase complex. Interacts with the SecYEG preprotein conducting channel. Has a central role in coupling the hydrolysis of ATP to the transfer of proteins into and across the cell membrane, serving as an ATP-driven molecular motor driving the stepwise translocation of polypeptide chains across the membrane. The polypeptide is Protein translocase subunit SecA (Wigglesworthia glossinidia brevipalpis).